The chain runs to 430 residues: Trigger factor (430 aa).

The PPIase FKBP-type domain occupies glycine 157 to proline 242.

Belongs to the FKBP-type PPIase family. Tig subfamily.

It localises to the cytoplasm. It catalyses the reaction [protein]-peptidylproline (omega=180) = [protein]-peptidylproline (omega=0). Functionally, involved in protein export. Acts as a chaperone by maintaining the newly synthesized protein in an open conformation. Functions as a peptidyl-prolyl cis-trans isomerase. The polypeptide is Trigger factor (Xanthomonas campestris pv. campestris (strain ATCC 33913 / DSM 3586 / NCPPB 528 / LMG 568 / P 25)).